A 61-amino-acid polypeptide reads, in one-letter code: Large ribosomal subunit protein eL20 (61 aa).

The protein belongs to the eukaryotic ribosomal protein eL20 family. Part of the 50S ribosomal subunit. Binds 23S rRNA.

This is Large ribosomal subunit protein eL20 from Methanosarcina acetivorans (strain ATCC 35395 / DSM 2834 / JCM 12185 / C2A).